The chain runs to 152 residues: Deoxyuridine 5'-triphosphate nucleotidohydrolase (152 aa).

Residues 72–74 (RSG), Asn85, and 89–91 (TVD) each bind substrate.

This sequence belongs to the dUTPase family. Mg(2+) is required as a cofactor.

The enzyme catalyses dUTP + H2O = dUMP + diphosphate + H(+). It participates in pyrimidine metabolism; dUMP biosynthesis; dUMP from dCTP (dUTP route): step 2/2. This enzyme is involved in nucleotide metabolism: it produces dUMP, the immediate precursor of thymidine nucleotides and it decreases the intracellular concentration of dUTP so that uracil cannot be incorporated into DNA. The polypeptide is Deoxyuridine 5'-triphosphate nucleotidohydrolase (Nitrobacter winogradskyi (strain ATCC 25391 / DSM 10237 / CIP 104748 / NCIMB 11846 / Nb-255)).